Reading from the N-terminus, the 209-residue chain is MRQHVNPLSKNFFEIDPIPPLNQVFENPKLPLHLDIGCASGEFLFELSLKNKNWNYIGIEIREKLVLNANLKMKSRENKNLYFSFGNANNIFNQTNNKSIINLITSISFNFPDPWFKKKHHKRRVIQPKLLNLLSNSMKKGSLIFIKTDVRDLFDHMELTISESIKFKKIPYQDVDFCESFNPNRIQTNREKYVILNQLKIYESIYKKI.

S-adenosyl-L-methionine is bound by residues aspartate 35, glutamate 60, asparagine 87, and aspartate 113. Aspartate 113 is an active-site residue. The substrate site is built by lysine 117 and aspartate 149.

The protein belongs to the class I-like SAM-binding methyltransferase superfamily. TrmB family.

The enzyme catalyses guanosine(46) in tRNA + S-adenosyl-L-methionine = N(7)-methylguanosine(46) in tRNA + S-adenosyl-L-homocysteine. Its pathway is tRNA modification; N(7)-methylguanine-tRNA biosynthesis. In terms of biological role, catalyzes the formation of N(7)-methylguanine at position 46 (m7G46) in tRNA. The protein is tRNA (guanine-N(7)-)-methyltransferase of Prochlorococcus marinus subsp. pastoris (strain CCMP1986 / NIES-2087 / MED4).